Consider the following 769-residue polypeptide: Calcium up-regulated protein B (769 aa).

The segment at 1 to 22 (MINIEDISKSSNQSEEKQLKST) is disordered. Ricin B-type lectin domains lie at 25-145 (KPKY…WTTF) and 158-296 (FQSK…WITN).

It belongs to the cup family.

It is found in the cytoplasm. Its subcellular location is the membrane. Its function is as follows. May play an important role in stabilizing and/or regulating the cell membrane during Ca(2+) stress or certain stages of development. The sequence is that of Calcium up-regulated protein B (cupB) from Dictyostelium discoideum (Social amoeba).